A 2924-amino-acid chain; its full sequence is Probable polyketide synthase 6 (2924 aa).

The region spanning 11 to 442 (EKGVAIVGIG…GSNCCLLISE (432 aa)) is the Ketosynthase family 3 (KS3) domain. Residues Cys181, His323, and His362 each act as for beta-ketoacyl synthase activity in the active site. The interval 635–668 (GVNPSFILGHSLGEISASYCSGMIDLDTFCYTVY) is acyl/malonyl transferase. Ser645 (for acyl/malonyl transferase activity) is an active-site residue. Residues 925–1047 (IDHLGLSNSY…SNFQLLDHGN (123 aa)) are N-terminal hotdog fold. The PKS/mFAS DH domain maps to 925–1210 (IDHLGLSNSY…CKSLIPIKDS (286 aa)). His959 (proton acceptor; for dehydratase activity) is an active-site residue. Residues 1064 to 1210 (NLSKLTKNEL…CKSLIPIKDS (147 aa)) form a C-terminal hotdog fold region. Asp1122 (proton donor; for dehydratase activity) is an active-site residue. The 78-residue stretch at 2431–2508 (TGNKNIDELF…ISIKMILNSL (78 aa)) folds into the Carrier domain. At Ser2468 the chain carries O-(pantetheine 4'-phosphoryl)serine. Residues 2551-2571 (KIILLTGTTGFLGGFLLFNML) traverse the membrane as a helical segment.

Pantetheine 4'-phosphate is required as a cofactor.

It localises to the membrane. Probable polyketide synthase. In Dictyostelium discoideum (Social amoeba), this protein is Probable polyketide synthase 6 (pks6).